We begin with the raw amino-acid sequence, 231 residues long: Large ribosomal subunit protein uL1 (231 aa).

The protein belongs to the universal ribosomal protein uL1 family. Part of the 50S ribosomal subunit.

In terms of biological role, binds directly to 23S rRNA. The L1 stalk is quite mobile in the ribosome, and is involved in E site tRNA release. Functionally, protein L1 is also a translational repressor protein, it controls the translation of the L11 operon by binding to its mRNA. The chain is Large ribosomal subunit protein uL1 from Polaromonas naphthalenivorans (strain CJ2).